The primary structure comprises 198 residues: Recombination protein RecR (198 aa).

A C4-type zinc finger spans residues 57–72; it reads CSVCGHITDRDPCYIC. One can recognise a Toprim domain in the interval 80–175; that stretch reads SVVCVVQEPK…KVTRIAHGLP (96 aa).

This sequence belongs to the RecR family.

Its function is as follows. May play a role in DNA repair. It seems to be involved in an RecBC-independent recombinational process of DNA repair. It may act with RecF and RecO. This is Recombination protein RecR from Bacillus thuringiensis (strain Al Hakam).